Reading from the N-terminus, the 234-residue chain is MSLAHSLICGCLMRESTEDTARFLEYPGIGLVEWRLDALHGIHTRNGLDEALAGLSLPGRHPVIATVRPERFRGGFRGTEEARIRALERTVRAGAEWIDLEDDLPEDVLSPFRDSAARVVISHHDFDGTPASDPLKHRVEHLATLGAHVLKIATYARTVEDNLRVLELIPFARKQFGAETIAFCMGPTGRWSRLACLLMGSPWTYVRFPELPASAPGQFTVAQMQTLLEIVGAG.

Residues 33-35 and Arg68 each bind 3-dehydroquinate; that span reads EWR. The active-site Proton donor/acceptor is the His124. Lys151 acts as the Schiff-base intermediate with substrate in catalysis. 3-dehydroquinate-binding residues include Arg193, Ser214, and Gln218.

It belongs to the type-I 3-dehydroquinase family. As to quaternary structure, homodimer.

The catalysed reaction is 3-dehydroquinate = 3-dehydroshikimate + H2O. Its pathway is metabolic intermediate biosynthesis; chorismate biosynthesis; chorismate from D-erythrose 4-phosphate and phosphoenolpyruvate: step 3/7. In terms of biological role, involved in the third step of the chorismate pathway, which leads to the biosynthesis of aromatic amino acids. Catalyzes the cis-dehydration of 3-dehydroquinate (DHQ) and introduces the first double bond of the aromatic ring to yield 3-dehydroshikimate. This Syntrophobacter fumaroxidans (strain DSM 10017 / MPOB) protein is 3-dehydroquinate dehydratase.